Here is a 258-residue protein sequence, read N- to C-terminus: (S)-hydroxynitrile lyase (258 aa).

An AB hydrolase-1 domain is found at 5-242 (HFVLIHTICH…GGDHKLQLTK (238 aa)). Thr11 and Ser80 together coordinate 2-hydroxy-2-methylpropanenitrile. Residues Thr11, Ser80, and Cys81 each contribute to the acetone site. Ser80 serves as the catalytic Proton donor/acceptor. His236 (proton donor/acceptor) is an active-site residue.

Belongs to the AB hydrolase superfamily. Hydroxynitrile lyase family. Homotetramer.

The enzyme catalyses a monosubstituted aliphatic (S)-hydroxynitrile = an aldehyde + hydrogen cyanide. It carries out the reaction a disubstituted aliphatic (S)-hydroxynitrile = a ketone + hydrogen cyanide. It catalyses the reaction an aromatic (S)-hydroxynitrile = an aromatic aldehyde + hydrogen cyanide. The catalysed reaction is 2-hydroxy-2-methylpropanenitrile = acetone + hydrogen cyanide. The enzyme catalyses butan-2-one + hydrogen cyanide = 2-hydroxy-2-methylbutanenitrile. It carries out the reaction pentan-2-one + hydrogen cyanide = (2S)-2-hydroxy-2-methylpentanenitrile. It catalyses the reaction hexan-2-one + hydrogen cyanide = (2S)-2-hydroxy-2-methylhexanenitrile. The catalysed reaction is heptan-2-one + hydrogen cyanide = (2S)-2-hydroxy-2-methylheptanenitrile. The enzyme catalyses 4-methylpentan-2-one + hydrogen cyanide = (2S)-2-hydroxy-2,4-dimethylpentanenitrile. It carries out the reaction 3,3-dimethylbutan-2-one + hydrogen cyanide = (2S)-2-hydroxy-2-methyl-3,3-dimethylbutanenitrile. It catalyses the reaction acetophenone + hydrogen cyanide = (2S)-2-hydroxy-2-phenylpropanenitrile. The catalysed reaction is propanal + hydrogen cyanide = (2S)-2-hydroxybutanenitrile. The enzyme catalyses pentanal + hydrogen cyanide = (2S)-2-hydroxyhexanenitrile. It carries out the reaction 2-methylpropanal + hydrogen cyanide = (2S)-2-hydroxy-3-methylbutanenitrile. It catalyses the reaction 2,2-dimethylpropanal + hydrogen cyanide = (2S)-2-hydroxy-3,3-dimethylbutanenitrile. The catalysed reaction is acrolein + hydrogen cyanide = (2S)-2-hydroxybut-3-enenitrile. The enzyme catalyses (2E)-but-2-enal + hydrogen cyanide = (2S,3E)-2-hydroxypent-3-enenitrile. It carries out the reaction (E)-hex-2-enal + hydrogen cyanide = (2S,3E)-2-hydroxyhept-3-enenitrile. It catalyses the reaction cyclohexanecarbaldehyde + hydrogen cyanide = (2S)-2-cyclohexyl-2-hydroxyacetonitrile. The catalysed reaction is benzaldehyde + hydrogen cyanide = (S)-mandelonitrile. The enzyme catalyses 4-methoxybenzaldehyde + hydrogen cyanide = (2S)-2-hydroxy-2-(4-methoxyphenyl)acetonitrile. It carries out the reaction piperonal + hydrogen cyanide = (2S)-2-(2H-1,3-benzodioxol-5-yl)-2-hydroxyacetonitrile. It catalyses the reaction formylthiophene + hydrogen cyanide = (2R)-2-hydroxy-2-(thiophen-2-yl)acetonitrile. The catalysed reaction is 3-formylthiophene + hydrogen cyanide = (2S)-2-hydroxy-2-(thiophen-3-yl)acetonitrile. The enzyme catalyses furan-3-carbaldehyde + hydrogen cyanide = (2S)-2-(furan-3-yl)-2-hydroxyacetonitrile. In terms of biological role, involved in cyanogenesis, the release of HCN from cyanogenic glycosides in injured tissues; the release of toxic HCN is believed to play a central role in the defense mechanism of plants against herbivores and microbial attack. Decomposes a variety of cyanohydrins (alpha-hydroxynitriles) into HCN and the corresponding aldehydes or ketones; two natural substrates are 2-hydroxy-2-methylpropanenitrile (acetone cyanohydrin) and 2-hydroxy-2-methylbutanenitrile (2-butanone cyanohydrin), but in vitro can also act on 2-hydroxy-2-methylpentanenitrile (2-pentanone cyanohydrin) and mandelonitrile. Is also able to catalyze the reverse reaction in vitro, leading to the stereospecific synthesis of aliphatic, aromatic, and heterocyclic cyanohydrins, important intermediates in the production of various agrochemicals or pharmaceuticals. This Manihot esculenta (Cassava) protein is (S)-hydroxynitrile lyase.